We begin with the raw amino-acid sequence, 943 residues long: Translation initiation factor IF-2 (943 aa).

Positions 35–359 are disordered; sequence MSSIDQDQEA…MPQRKERPLP (325 aa). Residues 57 to 76 are compositionally biased toward low complexity; the sequence is KAPSSQAAKTPAKAAKTSSA. Composition is skewed to basic and acidic residues over residues 92-103 and 110-124; these read SNDHADAAEHSQ and AKQENKPARSNKTSD. Over residues 130-141 the composition is skewed to polar residues; that stretch reads SKSTILRPRSTQ. A compositionally biased stretch (low complexity) spans 142–190; sequence TAHTNTNHNRGGNTASANNTANGRNSNRSNNNNNNRSANNANRSGNNNR. Composition is skewed to basic and acidic residues over residues 191–205, 239–250, and 259–271; these read SNERNRNDRNRRFDN, ASERQQPKRQEA, and KRSEQPRTERPRT. Low complexity-rich tracts occupy residues 289-299 and 315-330; these read PAAAAPKPASA and NFGRSNSYGNRNGFNR. Over residues 331–342 the composition is skewed to basic residues; it reads NNRRNKKNKRRQ. Residues 346 to 358 are compositionally biased toward basic and acidic residues; the sequence is PKKEMPQRKERPL. In terms of domain architecture, tr-type G spans 444-613; the sequence is PRPPVVTIMG…LLEADVLELK (170 aa). The tract at residues 453-460 is G1; it reads GHVDHGKT. Residue 453–460 coordinates GTP; sequence GHVDHGKT. The segment at 478-482 is G2; sequence GITQH. A G3 region spans residues 499 to 502; the sequence is DTPG. GTP contacts are provided by residues 499–503 and 553–556; these read DTPGH and NKID. The segment at 553 to 556 is G4; it reads NKID. Residues 589–591 form a G5 region; that stretch reads SAK.

This sequence belongs to the TRAFAC class translation factor GTPase superfamily. Classic translation factor GTPase family. IF-2 subfamily.

It localises to the cytoplasm. Functionally, one of the essential components for the initiation of protein synthesis. Protects formylmethionyl-tRNA from spontaneous hydrolysis and promotes its binding to the 30S ribosomal subunits. Also involved in the hydrolysis of GTP during the formation of the 70S ribosomal complex. The polypeptide is Translation initiation factor IF-2 (Lacticaseibacillus paracasei (strain ATCC 334 / BCRC 17002 / CCUG 31169 / CIP 107868 / KCTC 3260 / NRRL B-441) (Lactobacillus paracasei)).